Consider the following 179-residue polypeptide: MNDIISKINPFSSIPKHQIAQQIVNFGLIVATALMIWKGLMIFSGSESPIVVVLSGSMIPAFFRGDLLYLNMEDGPFRVGEIVVFKIEGKEIPIVHRILQIHEKEDGLYDIRTKGDNNNVDDVGLYSPGQRWLSRDHIIGRAKGFLPSVGMVTIVMHDYPQLKFFLVFVLAVFVLSTRE.

At 1–22 the chain is on the cytoplasmic side; sequence MNDIISKINPFSSIPKHQIAQQ. The helical; Signal-anchor for type II membrane protein transmembrane segment at 23-43 threads the bilayer; the sequence is IVNFGLIVATALMIWKGLMIF. At 44 to 179 the chain is on the lumenal side; sequence SGSESPIVVV…LAVFVLSTRE (136 aa). Catalysis depends on charge relay system residues S57, H96, and D122. Residues 165-176 are C-terminal short (CTS) helix; sequence FLVFVLAVFVLS.

It belongs to the peptidase S26B family. In terms of assembly, component of the signal peptidase complex (SPC) composed of a catalytic subunit sec11 and three accessory subunits spcs1, spcs2 and spcs3. The complex induces a local thinning of the ER membrane which is used to measure the length of the signal peptide (SP) h-region of protein substrates. This ensures the selectivity of the complex towards h-regions shorter than 18-20 amino acids.

It is found in the endoplasmic reticulum membrane. The catalysed reaction is Cleavage of hydrophobic, N-terminal signal or leader sequences from secreted and periplasmic proteins.. Functionally, catalytic component of the signal peptidase complex (SPC) which catalyzes the cleavage of N-terminal signal sequences from nascent proteins as they are translocated into the lumen of the endoplasmic reticulum. Specifically cleaves N-terminal signal peptides that contain a hydrophobic alpha-helix (h-region) shorter than 18-20 amino acids. In Dictyostelium discoideum (Social amoeba), this protein is Signal peptidase complex catalytic subunit sec11 (sec11).